The chain runs to 278 residues: Putative glycosyltransferase EpsE (278 aa).

Belongs to the glycosyltransferase 2 family.

Its function is as follows. May be involved in the production of the exopolysaccharide (EPS) component of the extracellular matrix during biofilm formation. EPS is responsible for the adhesion of chains of cells into bundles. Required for biofilm maintenance. The chain is Putative glycosyltransferase EpsE (epsE) from Bacillus subtilis (strain 168).